Consider the following 257-residue polypeptide: NAD kinase (257 aa).

Asp46 (proton acceptor) is an active-site residue. NAD(+)-binding positions include 46 to 47 (DG), 116 to 117 (NE), Asp146, Ala154, 157 to 162 (TAYNLS), and Asn218.

Belongs to the NAD kinase family. A divalent metal cation serves as cofactor.

The protein resides in the cytoplasm. It catalyses the reaction NAD(+) + ATP = ADP + NADP(+) + H(+). Functionally, involved in the regulation of the intracellular balance of NAD and NADP, and is a key enzyme in the biosynthesis of NADP. Catalyzes specifically the phosphorylation on 2'-hydroxyl of the adenosine moiety of NAD to yield NADP. In Brucella melitensis biotype 1 (strain ATCC 23456 / CCUG 17765 / NCTC 10094 / 16M), this protein is NAD kinase.